The sequence spans 273 residues: Protein FAM210A (273 aa).

The disordered stretch occupies residues 95 to 116 (VLSSSSTSQETPSEKKEEPDPL). Residues 106–116 (PSEKKEEPDPL) show a composition bias toward basic and acidic residues. Positions 118-230 (DKSISLYQRF…GYMSTPPPVK (113 aa)) constitute a DUF1279 domain. The chain crosses the membrane as a helical span at residues 138–158 (LIPVHLITSGIWFGTFYYASI). Residues 233–272 (LQGRMEETKELISEKMEETKDRLTEKLQETKEKVSFKKKV) adopt a coiled-coil conformation. Positions 247 to 273 (KMEETKDRLTEKLQETKEKVSFKKKVE) are disordered.

This sequence belongs to the FAM210 family. As to quaternary structure, interacts with ATAD3A.

Its subcellular location is the membrane. It is found in the mitochondrion. The protein localises to the cytoplasm. Functionally, may play a role in the structure and strength of both muscle and bone. In Rattus norvegicus (Rat), this protein is Protein FAM210A (Fam210a).